The chain runs to 201 residues: Small ribosomal subunit protein uS4c (201 aa).

The tract at residues 15–44 (LGALPGLTSKRPRSGSDLRNQSRSGKKSQY) is disordered. The region spanning 89 to 150 (MRLDNILFRL…EQRSRALIQN (62 aa)) is the S4 RNA-binding domain.

It belongs to the universal ribosomal protein uS4 family. In terms of assembly, part of the 30S ribosomal subunit. Contacts protein S5. The interaction surface between S4 and S5 is involved in control of translational fidelity.

It is found in the plastid. The protein resides in the chloroplast. One of the primary rRNA binding proteins, it binds directly to 16S rRNA where it nucleates assembly of the body of the 30S subunit. Functionally, with S5 and S12 plays an important role in translational accuracy. The sequence is that of Small ribosomal subunit protein uS4c (rps4) from Calycanthus floridus var. glaucus (Eastern sweetshrub).